A 199-amino-acid polypeptide reads, in one-letter code: NAD(P)H dehydrogenase (quinone) 1 (199 aa).

Positions 4–190 constitute a Flavodoxin-like domain; it reads VLVLYYSAYG…EAARFQGAHV (187 aa). FMN-binding positions include 10-15 and 78-80; these read SAYGHI and TRY. Y12 contacts NAD(+). Residue W98 coordinates substrate. FMN contacts are provided by residues 113-119 and H134; that span reads SSATQHG.

The protein belongs to the WrbA family. Requires FMN as cofactor.

The catalysed reaction is a quinone + NADH + H(+) = a quinol + NAD(+). It catalyses the reaction a quinone + NADPH + H(+) = a quinol + NADP(+). The chain is NAD(P)H dehydrogenase (quinone) 1 from Rhizobium meliloti (strain 1021) (Ensifer meliloti).